A 1865-amino-acid chain; its full sequence is Transcription initiation factor TFIID subunit 1 (1865 aa).

Residues 1-27 form a disordered region; it reads MLLPATGASRSAAIMSDTDSDEDSSGG. The Protein kinase 1 domain maps to 1 to 409; the sequence is MLLPATGASR…VTQLHWEDDI (409 aa). Residue S131 is modified to Phosphoserine; by autocatalysis. A disordered region spans residues 144–199; sequence EDIDCKLMPPPPPPPGPVKKEKDQDGLTGEKVDFSSSSDSESEMGPQEAAQAESKD. Pro residues predominate over residues 151–160; that stretch reads MPPPPPPPGP. Residues 161–176 show a composition bias toward basic and acidic residues; sequence VKKEKDQDGLTGEKVD. S302 is modified (phosphoserine; by autocatalysis). The interval 509 to 530 is disordered; that stretch reads PDEKEEATSNSPSKENKKESSL. The interval 512-971 is histone acetyltransferase (HAT); the sequence is KEEATSNSPS…KIPNKPTQQK (460 aa). The residue at position 539 (K539) is an N6-acetyllysine. Glycyl lysine isopeptide (Lys-Gly) (interchain with G-Cter in SUMO2) cross-links involve residues K544 and K557. Disordered regions lie at residues 964 to 983 and 1228 to 1252; these read PNKPTQQKDDKEPQPVKKTV and RLKRNQEKEKLKGPPEKKPKKMKER. Composition is skewed to basic and acidic residues over residues 969-978 and 1228-1244; these read QQKDDKEPQP and RLKRNQEKEKLKGPPEK. The HMG box DNA-binding region spans 1190–1268; sequence VRIRTTKDEE…CGACGAIGHM (79 aa). Positions 1337–1624 are interaction with ASF1A and ASF1B; that stretch reads VLKFPKQQLP…TAKEAALEEA (288 aa). A Nuclear localization signal motif is present at residues 1346 to 1353; sequence PPKKKRRV. 2 Bromo domains span residues 1371 to 1479 and 1493 to 1602; these read RRRT…LKEK and LLDD…LTEY. The Protein kinase 2 domain maps to 1420–1865; that stretch reads MDLQTLRENV…AGDSDMDSDE (446 aa). The tract at residues 1625–1865 is disordered; that stretch reads ELESLDPMTP…AGDSDMDSDE (241 aa). Over residues 1633-1642 the composition is skewed to pro residues; it reads TPGPYTPQPP. Over residues 1646–1682 the composition is skewed to polar residues; that stretch reads DNSTSLSVSRDASVYQDESNMSVLDIPSATSEKQLTQ. Residues S1664 and S1667 each carry the phosphoserine modification. 2 stretches are compositionally biased toward acidic residues: residues 1683–1697 and 1715–1730; these read EGEDGDGDLADEEEG and EGEDDEEDAGSDEEGD. Residues 1739–1751 are compositionally biased toward low complexity; that stretch reads SESGSDSDVGSGS. Phosphoserine is present on residues S1773, S1776, and S1794. The span at 1804-1814 shows a compositional bias: polar residues; it reads KSNTQDTSFSS. Residues 1820–1829 are compositionally biased toward acidic residues; that stretch reads VSEEEEDEEE. S1821 is modified (phosphoserine). The span at 1832–1841 shows a compositional bias: polar residues; sequence SGPSVLSQVH.

Belongs to the TAF1 family. In terms of assembly, component of the TFIID basal transcription factor complex, composed of TATA-box-binding protein TBP, and a number of TBP-associated factors (TAFs), including TAF1, TAF2, TAF3, TAF4, TAF5, TAF6, TAF7, TAF8, TAF9, TAF10, TAF11, TAF12 and TAF13. Interacts with TAF7; the interaction is direct. TAF1, when part of the TFIID complex, interacts with C-terminus of TP53. Part of a TFIID-containing RNA polymerase II pre-initiation complex that is composed of TBP and at least GTF2A1, GTF2A2, GTF2E1, GTF2E2, GTF2F1, GTF2H2, GTF2H3, GTF2H4, GTF2H5, GTF2B, TCEA1, ERCC2, ERCC3, TAF1, TAF2, TAF3, TAF4, TAF5, TAF6, TAF7, TAF8, TAF9, TAF10, TAF11, TAF12 and TAF13. Component of some MLL1/MLL complex, at least composed of the core components KMT2A/MLL1, ASH2L, HCFC1/HCF1, WDR5 and RBBP5, as well as the facultative components BACC1, CHD8, E2F6, HSP70, INO80C, KANSL1, LAS1L, MAX, MCRS1, MGA, KAT8/MOF, PELP1, PHF20, PRP31, RING2, RUVB1/TIP49A, RUVB2/TIP49B, SENP3, TAF1, TAF4, TAF6, TAF7, TAF9 and TEX10. RB1 interacts with the N-terminal domain of TAF1. Interacts with ASF1A and ASF1B. Interacts (via bromo domains) with acetylated lysine residues on the N-terminus of histone H1.4, H2A, H2B, H3 and H4 (in vitro). Mg(2+) is required as a cofactor. In terms of processing, phosphorylated by casein kinase II in vitro.

It localises to the nucleus. The catalysed reaction is L-seryl-[protein] + ATP = O-phospho-L-seryl-[protein] + ADP + H(+). It carries out the reaction L-threonyl-[protein] + ATP = O-phospho-L-threonyl-[protein] + ADP + H(+). It catalyses the reaction L-lysyl-[protein] + acetyl-CoA = N(6)-acetyl-L-lysyl-[protein] + CoA + H(+). Its activity is regulated as follows. Autophosphorylates on Ser residues. Inhibited by retinoblastoma tumor suppressor protein, RB1. Binding to TAF1 or CIITA inhibits the histone acetyltransferase activity. Functionally, the TFIID basal transcription factor complex plays a major role in the initiation of RNA polymerase II (Pol II)-dependent transcription. TFIID recognizes and binds promoters with or without a TATA box via its subunit TBP, a TATA-box-binding protein, and promotes assembly of the pre-initiation complex (PIC). The TFIID complex consists of TBP and TBP-associated factors (TAFs), including TAF1, TAF2, TAF3, TAF4, TAF5, TAF6, TAF7, TAF8, TAF9, TAF10, TAF11, TAF12 and TAF13. TAF1 is the largest component and core scaffold of the TFIID complex, involved in nucleating complex assembly. TAF1 forms a promoter DNA binding subcomplex of TFIID, together with TAF7 and TAF2. Contains novel N- and C-terminal Ser/Thr kinase domains which can autophosphorylate or transphosphorylate other transcription factors. Phosphorylates TP53 on 'Thr-55' which leads to MDM2-mediated degradation of TP53. Phosphorylates GTF2A1 and GTF2F1 on Ser residues. Possesses DNA-binding activity. Essential for progression of the G1 phase of the cell cycle. This Mesocricetus auratus (Golden hamster) protein is Transcription initiation factor TFIID subunit 1.